Reading from the N-terminus, the 444-residue chain is Serine--tRNA ligase (444 aa).

Position 249–251 (Thr249–Glu251) interacts with L-serine. Residues Arg280–Glu282 and Val296 contribute to the ATP site. Glu303 is an L-serine binding site. Glu367 to Ser370 is a binding site for ATP. Residue Thr401 coordinates L-serine.

This sequence belongs to the class-II aminoacyl-tRNA synthetase family. Type-1 seryl-tRNA synthetase subfamily. Homodimer. The tRNA molecule binds across the dimer.

Its subcellular location is the cytoplasm. It catalyses the reaction tRNA(Ser) + L-serine + ATP = L-seryl-tRNA(Ser) + AMP + diphosphate + H(+). The enzyme catalyses tRNA(Sec) + L-serine + ATP = L-seryl-tRNA(Sec) + AMP + diphosphate + H(+). The protein operates within aminoacyl-tRNA biosynthesis; selenocysteinyl-tRNA(Sec) biosynthesis; L-seryl-tRNA(Sec) from L-serine and tRNA(Sec): step 1/1. Functionally, catalyzes the attachment of serine to tRNA(Ser). Is also able to aminoacylate tRNA(Sec) with serine, to form the misacylated tRNA L-seryl-tRNA(Sec), which will be further converted into selenocysteinyl-tRNA(Sec). This chain is Serine--tRNA ligase, found in Picrophilus torridus (strain ATCC 700027 / DSM 9790 / JCM 10055 / NBRC 100828 / KAW 2/3).